A 297-amino-acid polypeptide reads, in one-letter code: SH2 domain-containing protein 6 (297 aa).

2 disordered regions span residues 1 to 61 and 74 to 93; these read MSCP…FPTR and MNPQ…RGTS. Pro residues predominate over residues 36–45; that stretch reads PSKPPLPPPQ. Residues 187-295 form the SH2 domain; the sequence is WYSGNCDRQS…RGLTYLRFPT (109 aa).

In Mus musculus (Mouse), this protein is SH2 domain-containing protein 6 (Sh2d6).